We begin with the raw amino-acid sequence, 442 residues long: D-aminoacyl-tRNA deacylase (442 aa).

The protein belongs to the DtdA deacylase family. As to quaternary structure, monomer. The cofactor is Zn(2+).

It catalyses the reaction a D-aminoacyl-tRNA + H2O = a tRNA + a D-alpha-amino acid + H(+). The catalysed reaction is glycyl-tRNA(Ala) + H2O = tRNA(Ala) + glycine + H(+). Its function is as follows. D-aminoacyl-tRNA deacylase with broad substrate specificity. By recycling D-aminoacyl-tRNA to D-amino acids and free tRNA molecules, this enzyme counteracts the toxicity associated with the formation of D-aminoacyl-tRNA entities in vivo. This is D-aminoacyl-tRNA deacylase from Methanospirillum hungatei JF-1 (strain ATCC 27890 / DSM 864 / NBRC 100397 / JF-1).